Consider the following 412-residue polypeptide: cAMP-dependent protein kinase regulatory subunit (412 aa).

Positions 1-11 (MSNYSHSSNNP) are enriched in polar residues. The segment at 1–146 (MSNYSHSSNN…TPPSHPKSEE (146 aa)) is disordered. Positions 16 to 29 (STKEDKPSSFHKIA) are enriched in basic and acidic residues. Positions 23–159 (SSFHKIAEDE…RLKTAVSNNF (137 aa)) are dimerization and phosphorylation. Polar residues-rich tracts occupy residues 49-60 (NADNSAGGNNPL) and 119-138 (TSVS…SWTP). Phosphoserine is present on Ser120. 3',5'-cyclic AMP-binding positions include 160 to 291 (LFSH…EEVP), Glu238, Arg247, 292 to 405 (LLSS…TEYS), Glu359, and Arg368.

The protein belongs to the cAMP-dependent kinase regulatory chain family. In terms of assembly, tetramer, composed of 2 regulatory (R) and 2 catalytic (C) subunits. In the presence of cAMP it dissociates into 2 active monomeric C subunits and an R dimer.

The polypeptide is cAMP-dependent protein kinase regulatory subunit (pkaR) (Emericella nidulans (strain FGSC A4 / ATCC 38163 / CBS 112.46 / NRRL 194 / M139) (Aspergillus nidulans)).